A 139-amino-acid chain; its full sequence is D-ribose pyranase (139 aa).

His20 (proton donor) is an active-site residue. Substrate is bound by residues Asp28, His106, and 128 to 130 (YAN).

This sequence belongs to the RbsD / FucU family. RbsD subfamily. As to quaternary structure, homodecamer.

It localises to the cytoplasm. It catalyses the reaction beta-D-ribopyranose = beta-D-ribofuranose. It functions in the pathway carbohydrate metabolism; D-ribose degradation; D-ribose 5-phosphate from beta-D-ribopyranose: step 1/2. Catalyzes the interconversion of beta-pyran and beta-furan forms of D-ribose. This Aeromonas hydrophila subsp. hydrophila (strain ATCC 7966 / DSM 30187 / BCRC 13018 / CCUG 14551 / JCM 1027 / KCTC 2358 / NCIMB 9240 / NCTC 8049) protein is D-ribose pyranase.